We begin with the raw amino-acid sequence, 179 residues long: Large ribosomal subunit protein uL5 (179 aa).

The protein belongs to the universal ribosomal protein uL5 family. Part of the 50S ribosomal subunit; part of the 5S rRNA/L5/L18/L25 subcomplex. Contacts the 5S rRNA and the P site tRNA. Forms a bridge to the 30S subunit in the 70S ribosome.

In terms of biological role, this is one of the proteins that bind and probably mediate the attachment of the 5S RNA into the large ribosomal subunit, where it forms part of the central protuberance. In the 70S ribosome it contacts protein S13 of the 30S subunit (bridge B1b), connecting the 2 subunits; this bridge is implicated in subunit movement. Contacts the P site tRNA; the 5S rRNA and some of its associated proteins might help stabilize positioning of ribosome-bound tRNAs. The sequence is that of Large ribosomal subunit protein uL5 from Buchnera aphidicola subsp. Acyrthosiphon kondoi (Acyrthosiphon kondoi symbiotic bacterium).